The sequence spans 34 residues: Photosystem I reaction center subunit XII (34 aa).

Residues 11-31 (VAIAFVVALIAGIAALLLSTA) traverse the membrane as a helical segment.

It belongs to the PsaM family. The G.violaceus PSI reaction center is composed of one copy each of PsaA,B,C,D,E,F,L,M and Z, and forms trimeric complexes.

It is found in the cell inner membrane. The sequence is that of Photosystem I reaction center subunit XII from Gloeobacter violaceus (strain ATCC 29082 / PCC 7421).